The following is a 168-amino-acid chain: Photosystem I assembly protein Ycf3 (168 aa).

3 TPR repeats span residues 35–68 (AFTY…EIDP), 72–105 (SYIL…NPFL), and 120–153 (GEQA…TPGN).

It belongs to the Ycf3 family. In terms of assembly, interacts with Y3IP1.

The protein localises to the plastid. It localises to the chloroplast thylakoid membrane. Functionally, essential for the assembly of the photosystem I (PSI) complex. May act as a chaperone-like factor to guide the assembly of the PSI subunits. This is Photosystem I assembly protein Ycf3 from Arabidopsis thaliana (Mouse-ear cress).